A 185-amino-acid polypeptide reads, in one-letter code: ATP synthase subunit b, chloroplastic (185 aa).

The helical transmembrane segment at 31 to 53 (IINITVVLGILIYFGKGVLSNLL) threads the bilayer.

Belongs to the ATPase B chain family. As to quaternary structure, F-type ATPases have 2 components, F(1) - the catalytic core - and F(0) - the membrane proton channel. F(1) has five subunits: alpha(3), beta(3), gamma(1), delta(1), epsilon(1). F(0) has four main subunits: a(1), b(1), b'(1) and c(10-14). The alpha and beta chains form an alternating ring which encloses part of the gamma chain. F(1) is attached to F(0) by a central stalk formed by the gamma and epsilon chains, while a peripheral stalk is formed by the delta, b and b' chains.

The protein localises to the plastid. It localises to the chloroplast thylakoid membrane. Functionally, f(1)F(0) ATP synthase produces ATP from ADP in the presence of a proton or sodium gradient. F-type ATPases consist of two structural domains, F(1) containing the extramembraneous catalytic core and F(0) containing the membrane proton channel, linked together by a central stalk and a peripheral stalk. During catalysis, ATP synthesis in the catalytic domain of F(1) is coupled via a rotary mechanism of the central stalk subunits to proton translocation. Its function is as follows. Component of the F(0) channel, it forms part of the peripheral stalk, linking F(1) to F(0). This chain is ATP synthase subunit b, chloroplastic, found in Gnetum parvifolium (Small-leaved jointfir).